A 156-amino-acid chain; its full sequence is 6,7-dimethyl-8-ribityllumazine synthase (156 aa).

Residues Phe22, 56–58 (ALE), and 80–82 (AVI) contribute to the 5-amino-6-(D-ribitylamino)uracil site. Residue 85–86 (DT) participates in (2S)-2-hydroxy-3-oxobutyl phosphate binding. The active-site Proton donor is His88. Residue Phe113 coordinates 5-amino-6-(D-ribitylamino)uracil. A (2S)-2-hydroxy-3-oxobutyl phosphate-binding site is contributed by Arg127.

This sequence belongs to the DMRL synthase family.

The enzyme catalyses (2S)-2-hydroxy-3-oxobutyl phosphate + 5-amino-6-(D-ribitylamino)uracil = 6,7-dimethyl-8-(1-D-ribityl)lumazine + phosphate + 2 H2O + H(+). The protein operates within cofactor biosynthesis; riboflavin biosynthesis; riboflavin from 2-hydroxy-3-oxobutyl phosphate and 5-amino-6-(D-ribitylamino)uracil: step 1/2. Functionally, catalyzes the formation of 6,7-dimethyl-8-ribityllumazine by condensation of 5-amino-6-(D-ribitylamino)uracil with 3,4-dihydroxy-2-butanone 4-phosphate. This is the penultimate step in the biosynthesis of riboflavin. This chain is 6,7-dimethyl-8-ribityllumazine synthase, found in Leuconostoc mesenteroides subsp. mesenteroides (strain ATCC 8293 / DSM 20343 / BCRC 11652 / CCM 1803 / JCM 6124 / NCDO 523 / NBRC 100496 / NCIMB 8023 / NCTC 12954 / NRRL B-1118 / 37Y).